We begin with the raw amino-acid sequence, 479 residues long: Aspartyl/glutamyl-tRNA(Asn/Gln) amidotransferase subunit B (479 aa).

This sequence belongs to the GatB/GatE family. GatB subfamily. In terms of assembly, heterotrimer of A, B and C subunits.

The enzyme catalyses L-glutamyl-tRNA(Gln) + L-glutamine + ATP + H2O = L-glutaminyl-tRNA(Gln) + L-glutamate + ADP + phosphate + H(+). It catalyses the reaction L-aspartyl-tRNA(Asn) + L-glutamine + ATP + H2O = L-asparaginyl-tRNA(Asn) + L-glutamate + ADP + phosphate + 2 H(+). Functionally, allows the formation of correctly charged Asn-tRNA(Asn) or Gln-tRNA(Gln) through the transamidation of misacylated Asp-tRNA(Asn) or Glu-tRNA(Gln) in organisms which lack either or both of asparaginyl-tRNA or glutaminyl-tRNA synthetases. The reaction takes place in the presence of glutamine and ATP through an activated phospho-Asp-tRNA(Asn) or phospho-Glu-tRNA(Gln). In Myxococcus xanthus (strain DK1622), this protein is Aspartyl/glutamyl-tRNA(Asn/Gln) amidotransferase subunit B.